Reading from the N-terminus, the 131-residue chain is Fatty acid-binding protein (131 aa).

Residues R106 and 126–128 (RPY) each bind (5Z,8Z,11Z,14Z)-eicosatetraenoate. Residues R106 and 126–128 (RPY) each bind (9Z)-octadecenoate.

Belongs to the calycin superfamily. Fatty-acid binding protein (FABP) family.

It is found in the cytoplasm. Its function is as follows. FABPs are thought to play a role in the intracellular transport of long-chain fatty acids and their acyl-CoA esters. The polypeptide is Fatty acid-binding protein (Lepidoglyphus destructor (Storage mite)).